Here is a 228-residue protein sequence, read N- to C-terminus: MKVAADLSAFMDRLGHRFTTPEHLVRALTHSSLGSATRPDNQRLEFLGDRVLGLSMAEALFHADGRASEGQLAPRFNALVRKETCAAVARDIDLGAVLKLGRSEMMSGGRRKDALLGDAMEAVIAAVYLDAGFEVARALVLRLWAARIQSVDNDARDPKTALQEWAQARGLPPPRYETLGRDGPDHAPQFRIAVVLASGETEEAQAGSKRNAEQAAAKALLERLERGA.

The RNase III domain occupies 7-132 (LSAFMDRLGH…VIAAVYLDAG (126 aa)). E45 is a Mg(2+) binding site. The active site involves D49. Mg(2+) contacts are provided by D118 and E121. The active site involves E121. Positions 157 to 226 (DPKTALQEWA…AKALLERLER (70 aa)) constitute a DRBM domain.

The protein belongs to the ribonuclease III family. Homodimer. Mg(2+) is required as a cofactor.

Its subcellular location is the cytoplasm. It catalyses the reaction Endonucleolytic cleavage to 5'-phosphomonoester.. In terms of biological role, digests double-stranded RNA. Involved in the processing of ribosomal RNA precursors and of some mRNAs. Complements an E.coli disruption mutant, but the E.coli enzyme does not cleave R.capsulatus rRNA precursor, showing substrate recognition is different. Probably also processes some mRNAs, and tRNAs when they are encoded in the rRNA operon. Probably processes pre-crRNA and tracrRNA of type II CRISPR loci if present in the organism. The chain is Ribonuclease 3 (rnc) from Rhodobacter capsulatus (Rhodopseudomonas capsulata).